Reading from the N-terminus, the 199-residue chain is Adenylyl-sulfate kinase (199 aa).

Residue 34–41 (GLSGSGKS) coordinates ATP. Serine 108 serves as the catalytic Phosphoserine intermediate.

This sequence belongs to the APS kinase family.

It catalyses the reaction adenosine 5'-phosphosulfate + ATP = 3'-phosphoadenylyl sulfate + ADP + H(+). It functions in the pathway sulfur metabolism; hydrogen sulfide biosynthesis; sulfite from sulfate: step 2/3. In terms of biological role, catalyzes the synthesis of activated sulfate. The protein is Adenylyl-sulfate kinase of Staphylococcus carnosus (strain TM300).